Consider the following 103-residue polypeptide: Defensin-like protein 289 (103 aa).

Positions 1 to 29 (MATLKTTIFIIFILYISCTMFVNIFRVQA) are cleaved as a signal peptide. 6 disulfide bridges follow: C33–C50, C39–C55, C43–C57, C72–C92, C78–C98, and C84–C100.

This sequence belongs to the DEFL family.

Its subcellular location is the secreted. The chain is Defensin-like protein 289 from Arabidopsis thaliana (Mouse-ear cress).